Here is an 81-residue protein sequence, read N- to C-terminus: Small ribosomal subunit protein uS17 (81 aa).

It belongs to the universal ribosomal protein uS17 family. As to quaternary structure, part of the 30S ribosomal subunit.

Its function is as follows. One of the primary rRNA binding proteins, it binds specifically to the 5'-end of 16S ribosomal RNA. The chain is Small ribosomal subunit protein uS17 from Hyphomonas neptunium (strain ATCC 15444).